Here is a 294-residue protein sequence, read N- to C-terminus: Ferredoxin--NADP reductase (294 aa).

Residues 13-137 enclose the FAD-binding FR-type domain; it reads KNPYIGKCLS…TGPVGKEMLL (125 aa). FAD is bound by residues 72 to 75, 93 to 95, Tyr-99, 111 to 113, and Thr-152; these read RLYS, CVR, and VCS. Positions 75 and 95 each coordinate NADP(+). NADP(+) contacts are provided by residues Thr-152, 184 to 185, 214 to 215, Lys-224, 224 to 228, 253 to 254, and Glu-292; these read IP, SR, KMYIQ, and GL.

Belongs to the ferredoxin--NADP reductase type 1 family. It depends on FAD as a cofactor.

The protein resides in the cellular thylakoid membrane. The enzyme catalyses 2 reduced [2Fe-2S]-[ferredoxin] + NADP(+) + H(+) = 2 oxidized [2Fe-2S]-[ferredoxin] + NADPH. This is Ferredoxin--NADP reductase (petH) from Spirulina sp.